The following is a 344-amino-acid chain: Krueppel-like factor 3 (344 aa).

The repressor domain stretch occupies residues 1 to 74 (MLMFDPVPVK…TVNKRGSPPA (74 aa)). A Glycyl lysine isopeptide (Lys-Gly) (interchain with G-Cter in SUMO) cross-link involves residue K10. A 9aaTAD; inactive motif is present at residues 60–68 (EPVDLTVNK). The CTBP-binding motif motif lies at 61–65 (PVDLT). Residues 66-111 (VNKRGSPPAAGGSPSSLKFPSHRRASPGLSMPSSSPPIKKYSPPSP) form a disordered region. K68 participates in a covalent cross-link: Glycyl lysine isopeptide (Lys-Gly) (interchain with G-Cter in SUMO2). Low complexity-rich tracts occupy residues 70–81 (GSPPAAGGSPSS) and 91–107 (SPGL…KKYS). Phosphoserine occurs at positions 71, 91, 100, 107, and 110. Residue K195 forms a Glycyl lysine isopeptide (Lys-Gly) (interchain with G-Cter in SUMO2) linkage. K197 participates in a covalent cross-link: Glycyl lysine isopeptide (Lys-Gly) (interchain with G-Cter in SUMO); alternate. K197 participates in a covalent cross-link: Glycyl lysine isopeptide (Lys-Gly) (interchain with G-Cter in SUMO2); alternate. Phosphoserine occurs at positions 215, 223, and 249. The disordered stretch occupies residues 235-254 (SVIVQPGKRPLPVESPDTQR). 3 C2H2-type zinc fingers span residues 259–283 (HRCD…RRTH), 289–313 (YKCT…FRKH), and 319–341 (FQCP…RKRH).

The protein belongs to the krueppel C2H2-type zinc-finger protein family. Monomer. Sumoylated with SUMO1. Sumoylation is enhanced by PIAS1, PIAS2alpha and PIAS2beta, and PIAS4, but not by Pc2. Enhances transcriptional repression, but has no effect on DNA binding. Sumoylation on Lys-197 is the major site. In terms of tissue distribution, in 8.5 day embryos, expressed in midbrain, anterior hindbrain and ventral forebrain. In 9 day embryos, expressed throughout ventral anterior half of embryo including midbrain-hindbrain junction, ventral midbrain, diencephalon and forebrain. At 10.5 days, distribution is more widespread with expression also found in developing limb buds. Widely expressed in the adult.

The protein localises to the nucleus. Binds to the CACCC box of erythroid cell-expressed genes. May play a role in hematopoiesis. The polypeptide is Krueppel-like factor 3 (Klf3) (Mus musculus (Mouse)).